Consider the following 81-residue polypeptide: Putative defensin-like protein 265 (81 aa).

Positions 1–26 (MEKTVSRKVVVLAILLSLSCLCIAKA) are cleaved as a signal peptide. 3 cysteine pairs are disulfide-bonded: Cys-48–Cys-66, Cys-54–Cys-71, and Cys-58–Cys-73.

The protein belongs to the DEFL family.

It is found in the secreted. The chain is Putative defensin-like protein 265 from Arabidopsis thaliana (Mouse-ear cress).